Reading from the N-terminus, the 244-residue chain is uncharacterized protein (244 aa).

In terms of domain architecture, GP-PDE spans 5–244 (QLLLAHRGYS…ANKKFEIKIN (240 aa)).

To glycerophosphoryl diester phosphodiesterases (EC 3.1.4.46). It to M.genitalium MG385.

This is an uncharacterized protein from Mycoplasma genitalium (strain ATCC 33530 / DSM 19775 / NCTC 10195 / G37) (Mycoplasmoides genitalium).